The chain runs to 345 residues: Ferrochelatase (345 aa).

Fe cation contacts are provided by His215 and Glu296.

Belongs to the ferrochelatase family.

The protein localises to the cytoplasm. The enzyme catalyses heme b + 2 H(+) = protoporphyrin IX + Fe(2+). It participates in porphyrin-containing compound metabolism; protoheme biosynthesis; protoheme from protoporphyrin-IX: step 1/1. In terms of biological role, catalyzes the ferrous insertion into protoporphyrin IX. The polypeptide is Ferrochelatase (Rhodopseudomonas palustris (strain BisA53)).